The primary structure comprises 183 residues: Putative manganese efflux pump MntP (183 aa).

6 helical membrane-spanning segments follow: residues Thr3 to Tyr23, Thr43 to Ile63, Ile66 to Leu86, Leu107 to Ile127, Phe134 to Leu154, and Ile161 to Ile181.

The protein belongs to the MntP (TC 9.B.29) family.

The protein localises to the cell inner membrane. In terms of biological role, probably functions as a manganese efflux pump. The polypeptide is Putative manganese efflux pump MntP (Fusobacterium nucleatum subsp. nucleatum (strain ATCC 25586 / DSM 15643 / BCRC 10681 / CIP 101130 / JCM 8532 / KCTC 2640 / LMG 13131 / VPI 4355)).